The primary structure comprises 502 residues: Membrane protein insertase YidC (502 aa).

The next 6 helical transmembrane spans lie at 12-32, 286-306, 312-332, 382-402, 409-429, and 452-472; these read FLIF…FYIY, LDWG…YWIY, WVLS…PLGY, LPIL…IITV, FLWI…VIMG, and ITSV…VLYW.

The protein belongs to the OXA1/ALB3/YidC family. Type 1 subfamily. As to quaternary structure, interacts with the Sec translocase complex via SecD. Specifically interacts with transmembrane segments of nascent integral membrane proteins during membrane integration.

The protein localises to the cell membrane. Required for the insertion and/or proper folding and/or complex formation of integral membrane proteins into the membrane. Involved in integration of membrane proteins that insert both dependently and independently of the Sec translocase complex, as well as at least some lipoproteins. Aids folding of multispanning membrane proteins. The chain is Membrane protein insertase YidC from Aquifex aeolicus (strain VF5).